The sequence spans 192 residues: Phosphoheptose isomerase (192 aa).

One can recognise an SIS domain in the interval 37-192; sequence LADSFKAGGK…IQLIEKEMVK (156 aa). Position 52-54 (52-54) interacts with substrate; that stretch reads NGG. Residues His61 and Glu65 each contribute to the Zn(2+) site. Substrate is bound by residues Glu65, 93–94, 119–121, Ser124, and Gln172; these read ND and STS. Zn(2+) is bound by residues Gln172 and His180.

Belongs to the SIS family. GmhA subfamily. In terms of assembly, homotetramer. It depends on Zn(2+) as a cofactor.

Its subcellular location is the cytoplasm. It catalyses the reaction 2 D-sedoheptulose 7-phosphate = D-glycero-alpha-D-manno-heptose 7-phosphate + D-glycero-beta-D-manno-heptose 7-phosphate. It functions in the pathway carbohydrate biosynthesis; D-glycero-D-manno-heptose 7-phosphate biosynthesis; D-glycero-alpha-D-manno-heptose 7-phosphate and D-glycero-beta-D-manno-heptose 7-phosphate from sedoheptulose 7-phosphate: step 1/1. Catalyzes the isomerization of sedoheptulose 7-phosphate in D-glycero-D-manno-heptose 7-phosphate. This is Phosphoheptose isomerase from Salmonella agona (strain SL483).